The chain runs to 582 residues: tRNA-guanine(15) transglycosylase (582 aa).

The active-site Nucleophile is the Asp-95. The substrate site is built by Asp-130 and Gly-196. Zn(2+) is bound by residues Cys-279, Cys-281, and Cys-284. The PUA domain maps to 507-582 (RMRVVVNKEA…RAVKVRKGVE (76 aa)).

The protein belongs to the archaeosine tRNA-ribosyltransferase family. In terms of assembly, homodimer. Requires Zn(2+) as cofactor.

The catalysed reaction is guanosine(15) in tRNA + 7-cyano-7-deazaguanine = 7-cyano-7-carbaguanosine(15) in tRNA + guanine. The protein operates within tRNA modification; archaeosine-tRNA biosynthesis. In terms of biological role, exchanges the guanine residue with 7-cyano-7-deazaguanine (preQ0) at position 15 in the dihydrouridine loop (D-loop) of archaeal tRNAs. This is tRNA-guanine(15) transglycosylase (tgtA) from Pyrococcus horikoshii (strain ATCC 700860 / DSM 12428 / JCM 9974 / NBRC 100139 / OT-3).